A 284-amino-acid chain; its full sequence is uncharacterized protein (284 aa).

This sequence to E.coli YnjA.

This is an uncharacterized protein from Mycobacterium tuberculosis (strain CDC 1551 / Oshkosh).